The primary structure comprises 321 residues: Transaldolase (321 aa).

Catalysis depends on Lys-132, which acts as the Schiff-base intermediate with substrate.

It belongs to the transaldolase family. Type 1 subfamily. In terms of assembly, homodimer.

Its subcellular location is the cytoplasm. The enzyme catalyses D-sedoheptulose 7-phosphate + D-glyceraldehyde 3-phosphate = D-erythrose 4-phosphate + beta-D-fructose 6-phosphate. Its pathway is carbohydrate degradation; pentose phosphate pathway; D-glyceraldehyde 3-phosphate and beta-D-fructose 6-phosphate from D-ribose 5-phosphate and D-xylulose 5-phosphate (non-oxidative stage): step 2/3. Transaldolase is important for the balance of metabolites in the pentose-phosphate pathway. This is Transaldolase from Marinobacter nauticus (strain ATCC 700491 / DSM 11845 / VT8) (Marinobacter aquaeolei).